The chain runs to 297 residues: Putative peptidyl-prolyl cis-trans isomerase YacD (297 aa).

A signal peptide spans 1–32 (MKSRTIWTIILGALLVCCIAVAYTLTKSQAGA). The PpiC domain occupies 154–247 (DDSYRIRHIV…NGYAIIQLKE (94 aa)).

The catalysed reaction is [protein]-peptidylproline (omega=180) = [protein]-peptidylproline (omega=0). This chain is Putative peptidyl-prolyl cis-trans isomerase YacD (yacD), found in Bacillus subtilis (strain 168).